The sequence spans 401 residues: Steroid C26-monooxygenase (401 aa).

Heme is bound at residue C343.

The protein belongs to the cytochrome P450 family. Heme serves as cofactor.

It carries out the reaction cholest-4-en-3-one + 6 reduced [2Fe-2S]-[ferredoxin] + 3 O2 + 5 H(+) = (25R)-3-oxocholest-4-en-26-oate + 6 oxidized [2Fe-2S]-[ferredoxin] + 4 H2O. The protein operates within steroid metabolism; cholesterol degradation. Functionally, involved in the utilization of cholesterol as the sole carbon and energy source by degrading the side chain. Primarily catalyzes the sequential oxidation of the terminal methyl of cholest-4-en-3-one into (25R)-26-hydroxycholest-4-en-3-one (alcohol), (25R)-26-oxocholest-4-en-3-one (aldehyde), to finally yield the carboxylic acid (25R)-3-oxocholest-4-en-26-oate. Also able to sequentially oxidize cholesterol itself, not only cholest-4-en-3-one. This Mycolicibacterium smegmatis (strain ATCC 700084 / mc(2)155) (Mycobacterium smegmatis) protein is Steroid C26-monooxygenase.